A 354-amino-acid chain; its full sequence is NADPH dehydrogenase (354 aa).

The FMN site is built by Ser-23, Pro-24, Cys-26, Ala-58, and Gln-100. Tyr-182 acts as the Proton donor in catalysis. The FMN site is built by Arg-230, Leu-301, Gly-323, and Arg-324.

It belongs to the NADH:flavin oxidoreductase/NADH oxidase family. NamA subfamily. Homodimer. Behaves as an active monomer in solution while in the crystal packing assembles following the classical dimeric architecture of other thermophilic-like ene-reductases. It depends on FMN as a cofactor.

It catalyses the reaction A + NADPH + H(+) = AH2 + NADP(+). Ene-reductase that catalyzes the stereoselective reduction of activated C-C double bonds. Shows very good activity with 4-ketoisophorone, 2-cyclohexen-1-one and 1-octen-3-one, and low activity with maleimide, 2-methyl-pentenal, 2-methyl-cyclohexen-1-one, 2-cyclopenten-1-one and trans-2-hexen-1-al. Shows the highest catalytic efficiency with ketoisophorone. Exhibits a restricted substrate spectrum with generally lower activities compared to other ene-reductases. This is NADPH dehydrogenase from Chloroflexus aggregans (strain MD-66 / DSM 9485).